The sequence spans 148 residues: UPF0178 protein DP1304 (148 aa).

The protein belongs to the UPF0178 family.

The sequence is that of UPF0178 protein DP1304 from Desulfotalea psychrophila (strain LSv54 / DSM 12343).